Reading from the N-terminus, the 37-residue chain is MKVQPSVKKICDKCKVIRRHGRVMVICDNPRHKQRQG.

The protein belongs to the bacterial ribosomal protein bL36 family.

This is Large ribosomal subunit protein bL36 from Cutibacterium acnes (strain DSM 16379 / KPA171202) (Propionibacterium acnes).